The primary structure comprises 195 residues: Imidazoleglycerol-phosphate dehydratase (195 aa).

The protein belongs to the imidazoleglycerol-phosphate dehydratase family.

It is found in the cytoplasm. It carries out the reaction D-erythro-1-(imidazol-4-yl)glycerol 3-phosphate = 3-(imidazol-4-yl)-2-oxopropyl phosphate + H2O. It participates in amino-acid biosynthesis; L-histidine biosynthesis; L-histidine from 5-phospho-alpha-D-ribose 1-diphosphate: step 6/9. The sequence is that of Imidazoleglycerol-phosphate dehydratase from Koribacter versatilis (strain Ellin345).